The chain runs to 592 residues: Aspartate--tRNA ligase (592 aa).

An L-aspartate-binding site is contributed by Glu177. The segment at 201–204 (QIFK) is aspartate. Arg223 provides a ligand contact to L-aspartate. ATP-binding positions include 223 to 225 (RDE) and Gln232. Residue His451 participates in L-aspartate binding. Glu485 is a binding site for ATP. Position 492 (Arg492) interacts with L-aspartate. An ATP-binding site is contributed by 537-540 (GLDR).

It belongs to the class-II aminoacyl-tRNA synthetase family. Type 1 subfamily. Homodimer.

The protein resides in the cytoplasm. It catalyses the reaction tRNA(Asp) + L-aspartate + ATP = L-aspartyl-tRNA(Asp) + AMP + diphosphate. Catalyzes the attachment of L-aspartate to tRNA(Asp) in a two-step reaction: L-aspartate is first activated by ATP to form Asp-AMP and then transferred to the acceptor end of tRNA(Asp). In Bacillus licheniformis (strain ATCC 14580 / DSM 13 / JCM 2505 / CCUG 7422 / NBRC 12200 / NCIMB 9375 / NCTC 10341 / NRRL NRS-1264 / Gibson 46), this protein is Aspartate--tRNA ligase.